Consider the following 329-residue polypeptide: Vitamin B12 import system permease protein BtuC (329 aa).

A run of 9 helical transmembrane segments spans residues 18 to 38, 64 to 84, 91 to 111, 115 to 135, 149 to 169, 191 to 208, 243 to 263, 277 to 297, and 305 to 325; these read WLLSLSLLVLLATLLSLCAGE, LAVLLVGASLALSGAVMQALF, PGLLGVSNGAGVGLIAAVLLG, LPGWSLGLCAIAGALTITLIL, LLAGVALGIICSALMTWAIYF, WQQSWLMTALIPVLIWIC, GWMVGVSVAMAGAIGFIGLVI, VLLPGCALAGAIALLLADVVA, and ELPIGVVTATLGAPIFIWLLL.

The protein belongs to the binding-protein-dependent transport system permease family. FecCD subfamily. As to quaternary structure, the complex is composed of two ATP-binding proteins (BtuD), two transmembrane proteins (BtuC) and a solute-binding protein (BtuF).

It localises to the cell inner membrane. Functionally, part of the ABC transporter complex BtuCDF involved in vitamin B12 import. Involved in the translocation of the substrate across the membrane. In Salmonella arizonae (strain ATCC BAA-731 / CDC346-86 / RSK2980), this protein is Vitamin B12 import system permease protein BtuC.